The sequence spans 163 residues: Epithelial membrane protein 3 (163 aa).

Residues leucine 4 to leucine 24 traverse the membrane as a helical segment. N-linked (GlcNAc...) asparagine glycosylation is found at asparagine 47 and asparagine 56. 3 helical membrane-spanning segments follow: residues valine 66–phenylalanine 86, threonine 100–isoleucine 120, and phenylalanine 139–leucine 159.

Belongs to the PMP-22/EMP/MP20 family.

It localises to the membrane. Probably involved in cell proliferation and cell-cell interactions. The polypeptide is Epithelial membrane protein 3 (EMP3) (Homo sapiens (Human)).